The following is a 566-amino-acid chain: Urease subunit alpha (566 aa).

Residues 128–566 enclose the Urease domain; sequence GGIDTHIHWI…LPMAQRYFLF (439 aa). Ni(2+)-binding residues include His-133, His-135, and Lys-216. Residue Lys-216 is modified to N6-carboxylysine. His-218 contributes to the substrate binding site. Ni(2+)-binding residues include His-245 and His-271. His-319 serves as the catalytic Proton donor. Residue Asp-359 coordinates Ni(2+).

This sequence belongs to the metallo-dependent hydrolases superfamily. Urease alpha subunit family. As to quaternary structure, heterotrimer of UreA (gamma), UreB (beta) and UreC (alpha) subunits. Three heterotrimers associate to form the active enzyme. Ni cation is required as a cofactor. Post-translationally, carboxylation allows a single lysine to coordinate two nickel ions.

The protein localises to the cytoplasm. The enzyme catalyses urea + 2 H2O + H(+) = hydrogencarbonate + 2 NH4(+). Its pathway is nitrogen metabolism; urea degradation; CO(2) and NH(3) from urea (urease route): step 1/1. The sequence is that of Urease subunit alpha from Acinetobacter baylyi (strain ATCC 33305 / BD413 / ADP1).